A 729-amino-acid polypeptide reads, in one-letter code: Rho GTPase-activating protein 28 (729 aa).

Disordered regions lie at residues 20–42 (AQPP…LSRK) and 55–105 (SNES…AEVT). Over residues 65-75 (SRSNSEASVDS) the composition is skewed to polar residues. At Ser72 the chain carries Phosphoserine. Positions 80–89 (DFWREIESIK) are enriched in basic and acidic residues. Phosphothreonine is present on Thr159. Positions 176–236 (GVSESPPRDT…SQDKEGSFAV (61 aa)) are disordered. Residues 195-204 (GTKEERELPR) are compositionally biased toward basic and acidic residues. Polar residues predominate over residues 217-226 (SLNSTTLSDA). Positions 380 to 577 (VPLTVLLDGD…LMLKYQKILW (198 aa)) constitute a Rho-GAP domain. The tract at residues 612 to 631 (TLERETASPKTSKVLQKSPS) is disordered. Residues 619 to 630 (SPKTSKVLQKSP) show a composition bias toward polar residues.

As to expression, expressed in testis. Expressed at moderate level in kidney and ovary, and weakly expressed in spleen and skeletal muscle.

Functionally, GTPase activator for the Rho-type GTPases by converting them to an inactive GDP-bound state. The protein is Rho GTPase-activating protein 28 (ARHGAP28) of Homo sapiens (Human).